A 439-amino-acid polypeptide reads, in one-letter code: Enolase 1-1 (439 aa).

Thr-85 is modified (phosphothreonine). His-159 and Glu-168 together coordinate substrate. Glu-211 (proton donor) is an active-site residue. Asp-246 contributes to the Mg(2+) binding site. Ser-249 and Ser-250 each carry phosphoserine. Tyr-253 bears the Phosphotyrosine mark. Glu-295 and Asp-320 together coordinate substrate. Mg(2+)-binding residues include Glu-295 and Asp-320. Catalysis depends on Lys-345, which acts as the Proton acceptor. Ser-351 bears the Phosphoserine mark. Phosphothreonine is present on Thr-353. Ser-355 bears the Phosphoserine mark. Substrate-binding positions include 372-375 (SHRS) and Lys-396. At Ser-421 the chain carries Phosphoserine.

This sequence belongs to the enolase family. In terms of assembly, homodimer. It depends on Mg(2+) as a cofactor.

The protein localises to the cytoplasm. It carries out the reaction (2R)-2-phosphoglycerate = phosphoenolpyruvate + H2O. Its pathway is carbohydrate degradation; glycolysis; pyruvate from D-glyceraldehyde 3-phosphate: step 4/5. This Schizosaccharomyces pombe (strain 972 / ATCC 24843) (Fission yeast) protein is Enolase 1-1 (eno101).